The primary structure comprises 400 residues: Acetate kinase (400 aa).

N10 contributes to the Mg(2+) binding site. Residue K17 participates in ATP binding. R91 contributes to the substrate binding site. D150 acts as the Proton donor/acceptor in catalysis. ATP is bound by residues 210–214 (HLGNG), 285–287 (DCR), and 333–337 (GIGEN). E387 is a Mg(2+) binding site.

It belongs to the acetokinase family. Homodimer. Mg(2+) serves as cofactor. Mn(2+) is required as a cofactor.

The protein localises to the cytoplasm. The enzyme catalyses acetate + ATP = acetyl phosphate + ADP. Its pathway is metabolic intermediate biosynthesis; acetyl-CoA biosynthesis; acetyl-CoA from acetate: step 1/2. Catalyzes the formation of acetyl phosphate from acetate and ATP. Can also catalyze the reverse reaction. In Pectobacterium carotovorum subsp. carotovorum (strain PC1), this protein is Acetate kinase.